The following is a 275-amino-acid chain: Chemotaxis protein methyltransferase 1 (275 aa).

Positions Met1–Lys275 constitute a CheR-type methyltransferase domain. Residues Asn76, Thr78, Arg82, Glu117, Asp145, Asn201–Leu202, and Arg218–Asn219 contribute to the S-adenosyl-L-methionine site.

It carries out the reaction L-glutamyl-[protein] + S-adenosyl-L-methionine = [protein]-L-glutamate 5-O-methyl ester + S-adenosyl-L-homocysteine. Functionally, methylation of the membrane-bound methyl-accepting chemotaxis proteins (MCP) to form gamma-glutamyl methyl ester residues in MCP. In Vibrio cholerae serotype O1 (strain ATCC 39315 / El Tor Inaba N16961), this protein is Chemotaxis protein methyltransferase 1 (cheR1).